The primary structure comprises 726 residues: Catalase-peroxidase (726 aa).

Residues 90–213 (WHAAGTYRIG…LAAVQMGLIY (124 aa)) constitute a cross-link (tryptophyl-tyrosyl-methioninium (Trp-Tyr) (with M-239)). H91 functions as the Proton acceptor in the catalytic mechanism. The segment at residues 213–239 (YVNPEGPNGNPDPLAAARDIRETFARM) is a cross-link (tryptophyl-tyrosyl-methioninium (Tyr-Met) (with W-90)). H254 serves as a coordination point for heme b. Residues 334-359 (AHQWKPKHGAGANTVPDAHDPSKRHA) are disordered.

This sequence belongs to the peroxidase family. Peroxidase/catalase subfamily. In terms of assembly, homodimer or homotetramer. The cofactor is heme b. Formation of the three residue Trp-Tyr-Met cross-link is important for the catalase, but not the peroxidase activity of the enzyme.

The catalysed reaction is H2O2 + AH2 = A + 2 H2O. It carries out the reaction 2 H2O2 = O2 + 2 H2O. Functionally, bifunctional enzyme with both catalase and broad-spectrum peroxidase activity. This Bradyrhizobium sp. (strain BTAi1 / ATCC BAA-1182) protein is Catalase-peroxidase.